The sequence spans 241 residues: Thymidylate kinase (241 aa).

Gly17–Thr24 provides a ligand contact to ATP.

Belongs to the thymidylate kinase family.

It carries out the reaction dTMP + ATP = dTDP + ADP. Phosphorylation of dTMP to form dTDP in both de novo and salvage pathways of dTTP synthesis. The protein is Thymidylate kinase of Thermosynechococcus vestitus (strain NIES-2133 / IAM M-273 / BP-1).